A 395-amino-acid polypeptide reads, in one-letter code: 1-deoxy-D-xylulose 5-phosphate reductoisomerase (395 aa).

The NADPH site is built by Thr10, Gly11, Ser12, Ile13, Asn38, and Asn123. Lys124 is a binding site for 1-deoxy-D-xylulose 5-phosphate. Glu125 is an NADPH binding site. Residue Asp149 coordinates Mn(2+). Residues Ser150, Glu151, Ser185, and His208 each contribute to the 1-deoxy-D-xylulose 5-phosphate site. Glu151 lines the Mn(2+) pocket. Position 214 (Gly214) interacts with NADPH. Residues Ser221, Asn226, Lys227, and Glu230 each coordinate 1-deoxy-D-xylulose 5-phosphate. Glu230 contributes to the Mn(2+) binding site.

Belongs to the DXR family. Requires Mg(2+) as cofactor. Mn(2+) is required as a cofactor.

The catalysed reaction is 2-C-methyl-D-erythritol 4-phosphate + NADP(+) = 1-deoxy-D-xylulose 5-phosphate + NADPH + H(+). The protein operates within isoprenoid biosynthesis; isopentenyl diphosphate biosynthesis via DXP pathway; isopentenyl diphosphate from 1-deoxy-D-xylulose 5-phosphate: step 1/6. Catalyzes the NADPH-dependent rearrangement and reduction of 1-deoxy-D-xylulose-5-phosphate (DXP) to 2-C-methyl-D-erythritol 4-phosphate (MEP). The sequence is that of 1-deoxy-D-xylulose 5-phosphate reductoisomerase from Shewanella woodyi (strain ATCC 51908 / MS32).